Consider the following 90-residue polypeptide: Acylphosphatase (90 aa).

The 88-residue stretch at 3 to 90 folds into the Acylphosphatase-like domain; it reads KKQFIVYGLV…REFTDFSVRY (88 aa). Active-site residues include Arg18 and Asn36.

Belongs to the acylphosphatase family.

The enzyme catalyses an acyl phosphate + H2O = a carboxylate + phosphate + H(+). In Pasteurella multocida (strain Pm70), this protein is Acylphosphatase (acyP).